The primary structure comprises 235 residues: Small capsomere-interacting protein (235 aa).

The interval 104–235 (PRIIRPQPPN…SGNASRSRRV (132 aa)) is disordered. A compositionally biased stretch (polar residues) spans 127–139 (PQKTQSADQSALQ). The span at 158–188 (TTSASVGQQQHVVSGSSGQQPQQGAQSSTVQ) shows a compositional bias: low complexity. Residues 220 to 235 (LSHTGQSGNASRSRRV) show a composition bias toward polar residues.

The protein belongs to the herpesviridae small capsomere-interacting protein family. Interacts with the major capsid protein/MCP.

Its subcellular location is the virion. It localises to the host nucleus. Functionally, participates in the assembly of the infectious particles by decorating the outer surface of the capsid shell and thus forming a layer between the capsid and the tegument. Complexes composed of the capsid protein VP5 and VP26 assemble together in the host cytoplasm and are translocated to the nucleus, where they accumulate and participate in capsid assembly. Its function is as follows. Participates in the assembly of the infectious particles by decorating the outer surface of the capsid shell and thus forming a layer between the capsid and the tegument. Complexes composed of the major capsid protein and small capsomere-interacting protein/SCP assemble together in the host cytoplasm and are translocated to the nucleus, where they accumulate and participate in capsid assembly. The chain is Small capsomere-interacting protein from Homo sapiens (Human).